A 494-amino-acid polypeptide reads, in one-letter code: NADPH:adrenodoxin oxidoreductase, mitochondrial (494 aa).

The transit peptide at Met-1–Phe-34 directs the protein to the mitochondrion. FAD-binding residues include Ala-51, Glu-72, Leu-80, and Val-116. NADP(+) contacts are provided by residues Gln-187–Val-190, Arg-231–Arg-232, and Glu-243. The residue at position 313 (Ser-313) is a Phosphoserine. Residues Trp-401 and Gly-408–Ile-410 each bind FAD. Residue Gly-408 participates in NADP(+) binding.

The protein belongs to the ferredoxin--NADP reductase type 1 family. In terms of assembly, monomer. Interacts directly with FDX1. The cofactor is FAD. In terms of tissue distribution, expressed in the adrenal, testis and ovary and to a lesser extent in the liver and kidney.

It localises to the mitochondrion inner membrane. It carries out the reaction 2 reduced [adrenodoxin] + NADP(+) + H(+) = 2 oxidized [adrenodoxin] + NADPH. It catalyses the reaction 2 reduced [2Fe-2S]-[ferredoxin] + NADP(+) + H(+) = 2 oxidized [2Fe-2S]-[ferredoxin] + NADPH. It functions in the pathway steroid metabolism; cholesterol metabolism. Functionally, serves as the first electron transfer protein in all the mitochondrial P450 systems including cholesterol side chain cleavage in all steroidogenic tissues, steroid 11-beta hydroxylation in the adrenal cortex, 25-OH-vitamin D3-24 hydroxylation in the kidney, and sterol C-27 hydroxylation in the liver. Also acts as a ferredoxin--NADP(+) reductase essential for coenzyme Q biosynthesis: together with FDX2, transfers the electrons required for the hydroxylation reaction performed by COQ6. This is NADPH:adrenodoxin oxidoreductase, mitochondrial (Fdxr) from Mus musculus (Mouse).